We begin with the raw amino-acid sequence, 188 residues long: Protein SSX4 (188 aa).

In terms of domain architecture, KRAB-related spans 20–83 (KLRKAFDDIA…KRAADFHGND (64 aa)). Basic and acidic residues predominate over residues 116 to 127 (PAEEENGLKEVP). Positions 116–167 (PAEEENGLKEVPEASGPQNDGKQLCPPGNPSTLEKINKTSGPKRGKHAWTHR) are disordered. Positions 145 to 155 (PSTLEKINKTS) are enriched in polar residues. Over residues 156–167 (GPKRGKHAWTHR) the composition is skewed to basic residues.

The protein belongs to the SSX family.

In terms of biological role, could act as a modulator of transcription. The protein is Protein SSX4 (SSX4) of Homo sapiens (Human).